We begin with the raw amino-acid sequence, 208 residues long: Uridine kinase (208 aa).

11–18 lines the ATP pocket; sequence GGTGSGKS.

Belongs to the uridine kinase family.

The protein localises to the cytoplasm. The catalysed reaction is uridine + ATP = UMP + ADP + H(+). The enzyme catalyses cytidine + ATP = CMP + ADP + H(+). It functions in the pathway pyrimidine metabolism; CTP biosynthesis via salvage pathway; CTP from cytidine: step 1/3. The protein operates within pyrimidine metabolism; UMP biosynthesis via salvage pathway; UMP from uridine: step 1/1. This chain is Uridine kinase, found in Clostridium perfringens (strain ATCC 13124 / DSM 756 / JCM 1290 / NCIMB 6125 / NCTC 8237 / Type A).